We begin with the raw amino-acid sequence, 350 residues long: Atypical chemokine receptor 4 (350 aa).

Topologically, residues 1 to 41 (MAVEYNQSTDYYYEENEMNDTHDYSQYEVICIKEEVRKFAK) are extracellular. N-linked (GlcNAc...) asparagine glycans are attached at residues Asn-6 and Asn-19. Residues 42–66 (VFLPAFFTIAFIIGLAGNSTVVAIY) form a helical membrane-spanning segment. At 67 to 79 (AYYKKRRTKTDVY) the chain is on the cytoplasmic side. The helical transmembrane segment at 80–99 (ILNLAVADLFLLFTLPFWAV) threads the bilayer. Topologically, residues 100–113 (NAVHGWVLGKIMCK) are extracellular. Cys-112 and Cys-184 are oxidised to a cystine. Residues 114-135 (VTSALYTVNFVSGMQFLACIST) form a helical membrane-spanning segment. Topologically, residues 136-153 (DRYWAVTKAPSQSGVGKP) are cytoplasmic. Residues 154–175 (CWVICFCVWVAAILLSIPQLVF) traverse the membrane as a helical segment. The Extracellular portion of the chain corresponds to 176-199 (YTVNHKARCVPIFPYHLGTSMKAS). Residues 200–222 (IQILEICIGFIIPFLIMAVCYFI) traverse the membrane as a helical segment. Residues 223-241 (TAKTLIKMPNIKKSQPLKV) are Cytoplasmic-facing. A helical transmembrane segment spans residues 242 to 265 (LFTVVIVFIVTQLPYNIVKFCQAI). Topologically, residues 266-283 (DIIYSLITDCDMSKRMDV) are extracellular. The helical transmembrane segment at 284–306 (AIQITESIALFHSCLNPVLYVFM) threads the bilayer. Residues 307 to 350 (GTSFKNYIMKVAKKYGSWRRQRQNVEEIPFESEDATEPTSTFSI) lie on the Cytoplasmic side of the membrane.

Belongs to the G-protein coupled receptor 1 family. Atypical chemokine receptor subfamily. In terms of assembly, forms heteromers with CXCR3. Interacts with ARRB1 and ARRB2. Post-translationally, the Ser/Thr residues in the C-terminal cytoplasmic tail may be phosphorylated. In terms of tissue distribution, expressed in circumvallate and fungiform papillae, olfactory epithelium and lung. Lower expression in liver, kidney and tongue epithelium bearing no taste papillae. Very low expression in the cerebral cortex of the brain.

The protein resides in the early endosome. The protein localises to the recycling endosome. Its subcellular location is the cell membrane. Functionally, atypical chemokine receptor that controls chemokine levels and localization via high-affinity chemokine binding that is uncoupled from classic ligand-driven signal transduction cascades, resulting instead in chemokine sequestration, degradation, or transcytosis. Also known as interceptor (internalizing receptor) or chemokine-scavenging receptor or chemokine decoy receptor. Acts as a receptor for chemokines CCL2, CCL8, CCL13, CCL19, CCL21 and CCL25. Chemokine-binding does not activate G-protein-mediated signal transduction but instead induces beta-arrestin recruitment, leading to ligand internalization. Plays an important role in controlling the migration of immune and cancer cells that express chemokine receptors CCR7 and CCR9, by reducing the availability of CCL19, CCL21, and CCL25 through internalization. Negatively regulates CXCR3-induced chemotaxis. Regulates T-cell development in the thymus. This is Atypical chemokine receptor 4 (ACKR4) from Bos taurus (Bovine).